Reading from the N-terminus, the 338-residue chain is Glyceraldehyde-3-phosphate dehydrogenase (338 aa).

NAD(+) is bound by residues 13 to 14, Asp-35, and Arg-80; that span reads RI. D-glyceraldehyde 3-phosphate contacts are provided by residues 151–153, Thr-182, 211–212, and Arg-234; these read SCT and TG. The active-site Nucleophile is Cys-152. An NAD(+)-binding site is contributed by Asn-316.

This sequence belongs to the glyceraldehyde-3-phosphate dehydrogenase family. As to quaternary structure, homotetramer.

It is found in the cytoplasm. It carries out the reaction D-glyceraldehyde 3-phosphate + phosphate + NAD(+) = (2R)-3-phospho-glyceroyl phosphate + NADH + H(+). Its pathway is carbohydrate degradation; glycolysis; pyruvate from D-glyceraldehyde 3-phosphate: step 1/5. The polypeptide is Glyceraldehyde-3-phosphate dehydrogenase (GPDA) (Colletotrichum gloeosporioides (Anthracnose fungus)).